Consider the following 459-residue polypeptide: Glutamate--tRNA ligase 1 (459 aa).

Positions 8–18 (PSPTGYIHIGN) match the 'HIGH' region motif. Positions 249 to 253 (GLSKR) match the 'KMSKS' region motif. An ATP-binding site is contributed by Lys252.

This sequence belongs to the class-I aminoacyl-tRNA synthetase family. Glutamate--tRNA ligase type 1 subfamily. As to quaternary structure, monomer.

It localises to the cytoplasm. The enzyme catalyses tRNA(Glu) + L-glutamate + ATP = L-glutamyl-tRNA(Glu) + AMP + diphosphate. Its function is as follows. Catalyzes the attachment of glutamate to tRNA(Glu) in a two-step reaction: glutamate is first activated by ATP to form Glu-AMP and then transferred to the acceptor end of tRNA(Glu). The polypeptide is Glutamate--tRNA ligase 1 (Bartonella quintana (strain Toulouse) (Rochalimaea quintana)).